The sequence spans 455 residues: Gamma-glutamyl phosphate reductase (455 aa).

It belongs to the gamma-glutamyl phosphate reductase family.

Its subcellular location is the cytoplasm. It carries out the reaction L-glutamate 5-semialdehyde + phosphate + NADP(+) = L-glutamyl 5-phosphate + NADPH + H(+). The protein operates within amino-acid biosynthesis; L-proline biosynthesis; L-glutamate 5-semialdehyde from L-glutamate: step 2/2. Its function is as follows. Catalyzes the NADPH-dependent reduction of L-glutamate 5-phosphate into L-glutamate 5-semialdehyde and phosphate. The product spontaneously undergoes cyclization to form 1-pyrroline-5-carboxylate. This chain is Gamma-glutamyl phosphate reductase, found in Synechococcus sp. (strain JA-2-3B'a(2-13)) (Cyanobacteria bacterium Yellowstone B-Prime).